Reading from the N-terminus, the 284-residue chain is Homeobox protein six1 (284 aa).

Residues 124–183 (GEETSYCFKEKSRGVLREWYAHNPYPSPREKRELAEATGLTTTQVSNWFKNRRQRDRAAE) constitute a DNA-binding region (homeobox). A disordered region spans residues 168–230 (VSNWFKNRRQ…SPPQSPDQNS (63 aa)). Residues 179 to 190 (DRAAEAKERENT) show a composition bias toward basic and acidic residues. The segment covering 191 to 202 (ENNNTSTNKQNQ) has biased composition (low complexity).

Belongs to the SIX/Sine oculis homeobox family.

The protein localises to the nucleus. It is found in the cytoplasm. In terms of biological role, transcription factor that is involved in the regulation of cell proliferation, apoptosis and embryonic development. Depending on context, functions as a transcriptional repressor or activator. Required for the normal formation of pre-placodal ectoderm. In Xenopus laevis (African clawed frog), this protein is Homeobox protein six1 (six1).